Here is a 266-residue protein sequence, read N- to C-terminus: Electron transfer flavoprotein subunit beta (266 aa).

The protein belongs to the ETF beta-subunit/FixA family. Heterodimer of an alpha and a beta subunit. Requires FAD as cofactor. It depends on AMP as a cofactor.

The electron transfer flavoprotein serves as a specific electron acceptor for other dehydrogenases. It transfers the electrons to the main respiratory chain via ETF-ubiquinone oxidoreductase (ETF dehydrogenase). The protein is Electron transfer flavoprotein subunit beta (etfB) of Mycobacterium bovis (strain ATCC BAA-935 / AF2122/97).